The primary structure comprises 175 residues: Large ribosomal subunit protein uL6 (175 aa).

Belongs to the universal ribosomal protein uL6 family. In terms of assembly, part of the 50S ribosomal subunit.

Its function is as follows. This protein binds to the 23S rRNA, and is important in its secondary structure. It is located near the subunit interface in the base of the L7/L12 stalk, and near the tRNA binding site of the peptidyltransferase center. The polypeptide is Large ribosomal subunit protein uL6 (Xylella fastidiosa (strain 9a5c)).